The following is a 112-amino-acid chain: Putative pterin-4-alpha-carbinolamine dehydratase (112 aa).

The protein belongs to the pterin-4-alpha-carbinolamine dehydratase family.

The catalysed reaction is (4aS,6R)-4a-hydroxy-L-erythro-5,6,7,8-tetrahydrobiopterin = (6R)-L-erythro-6,7-dihydrobiopterin + H2O. The sequence is that of Putative pterin-4-alpha-carbinolamine dehydratase from Shewanella oneidensis (strain ATCC 700550 / JCM 31522 / CIP 106686 / LMG 19005 / NCIMB 14063 / MR-1).